The chain runs to 299 residues: tRNA pseudouridine synthase B (299 aa).

Catalysis depends on aspartate 39, which acts as the Nucleophile.

It belongs to the pseudouridine synthase TruB family. Type 1 subfamily.

It carries out the reaction uridine(55) in tRNA = pseudouridine(55) in tRNA. Responsible for synthesis of pseudouridine from uracil-55 in the psi GC loop of transfer RNAs. This is tRNA pseudouridine synthase B from Syntrophomonas wolfei subsp. wolfei (strain DSM 2245B / Goettingen).